The chain runs to 101 residues: Apolipoprotein C-II (101 aa).

Residues 1 to 22 (MGTRFLLALFLVLLVLGFEVQG) form the signal peptide. The tract at residues 66–74 (AVDEKLRDM) is lipid binding. Positions 78 to 101 (STAAVSTYAGIFTDQVLSMLRGEE) are lipoprotein lipase cofactor.

The protein belongs to the apolipoprotein C2 family. In terms of processing, proapolipoprotein C-II is synthesized as a sialic acid containing glycoprotein which is subsequently desialylated prior to its proteolytic processing. Proapolipoprotein C-II, the major form found in plasma undergoes proteolytic cleavage of its N-terminal hexapeptide to generate apolipoprotein C-II, which occurs as the minor form in plasma.

It localises to the secreted. Component of chylomicrons, very low-density lipoproteins (VLDL), low-density lipoproteins (LDL), and high-density lipoproteins (HDL) in plasma. Plays an important role in lipoprotein metabolism as an activator of lipoprotein lipase. Both proapolipoprotein C-II and apolipoprotein C-II can activate lipoprotein lipase. This Saimiri boliviensis boliviensis (Bolivian squirrel monkey) protein is Apolipoprotein C-II (APOC2).